An 84-amino-acid polypeptide reads, in one-letter code: Small ribosomal subunit protein bS16 (84 aa).

The protein belongs to the bacterial ribosomal protein bS16 family.

The sequence is that of Small ribosomal subunit protein bS16 from Delftia acidovorans (strain DSM 14801 / SPH-1).